We begin with the raw amino-acid sequence, 343 residues long: Anthranilate phosphoribosyltransferase (343 aa).

Residues glycine 78, 81 to 82, threonine 86, 88 to 91, 106 to 114, and serine 118 contribute to the 5-phospho-alpha-D-ribose 1-diphosphate site; these read GD, NIST, and KHGNRSVSS. Glycine 78 lines the anthranilate pocket. Serine 90 contacts Mg(2+). Position 109 (asparagine 109) interacts with anthranilate. Arginine 164 lines the anthranilate pocket. Mg(2+)-binding residues include aspartate 223 and glutamate 224.

Belongs to the anthranilate phosphoribosyltransferase family. In terms of assembly, homodimer. Requires Mg(2+) as cofactor.

The enzyme catalyses N-(5-phospho-beta-D-ribosyl)anthranilate + diphosphate = 5-phospho-alpha-D-ribose 1-diphosphate + anthranilate. Its pathway is amino-acid biosynthesis; L-tryptophan biosynthesis; L-tryptophan from chorismate: step 2/5. In terms of biological role, catalyzes the transfer of the phosphoribosyl group of 5-phosphorylribose-1-pyrophosphate (PRPP) to anthranilate to yield N-(5'-phosphoribosyl)-anthranilate (PRA). This Chlamydia caviae (strain ATCC VR-813 / DSM 19441 / 03DC25 / GPIC) (Chlamydophila caviae) protein is Anthranilate phosphoribosyltransferase.